A 647-amino-acid polypeptide reads, in one-letter code: MWRVCARRAQNAAPRAGFGARWTAFREEPGAPCVTPQAGSALARCSSKTPGYGRVRALCGWSPVSRATPRNRVLLQLWGSPSRRWYSLPPHQKVPLPSLSPTMQAGTIARWEKKEGEKINEGELIAEVETDKATVGFESVEECYMAKILVAEGTRDVPVGAIICITVDKPEDVEAFKNYTLDSSAAPAPPAAPAPTPAAPAPSPTPSAQAPGSSYPTHMQVLLPALSPTMTMGTVQRWEKKVGEKLNEGDLLAEIETDKATIGFEVQEEGYLAKILIPEGTRDVPLGTPLCIIVEKEADIPAFADYRPAEVTDLKPPAPPPIPSPAAPVPPAPQPVAPPPSAPRPAAPAGPKGRVFVSPLAKKLAAEKGIDLTQVKGTGPDGRIIKKDIDSFVPTKAAPTPAAAVPPPSPGVAPVPTGVFTDIPISNIRRVIAQRLMQSKQTIPHYYLSIDVNMGEVLLVRKELNKMLEGKSKISVNDFIIKASALACLKVPEANSSWMDTVIRQNHVVDISVAVSTPAGLITPIVFNAHIKGLETIANDVVSLATKAREGKLQPHEFQGGTFTISNLGMFGIKNFSAIINPPQACILAIGASEDRLVPADNEKGFDVASMMSVTLSCDHRVVDGAVGAQWLAEFRKYLEKPITMLL.

A mitochondrion-targeting transit peptide spans 1-86 (MWRVCARRAQ…LWGSPSRRWY (86 aa)). In terms of domain architecture, Lipoyl-binding 1 spans 91 to 167 (HQKVPLPSLS…PVGAIICITV (77 aa)). A Phosphoserine modification is found at serine 100. An N6-lipoyllysine modification is found at lysine 132. The disordered stretch occupies residues 184-216 (SAAPAPPAAPAPTPAAPAPSPTPSAQAPGSSYP). A compositionally biased stretch (pro residues) spans 187–205 (PAPPAAPAPTPAAPAPSPT). Residues 218–294 (HMQVLLPALS…PLGTPLCIIV (77 aa)) form the Lipoyl-binding 2 domain. Lysine 259 carries the N6-lipoyllysine modification. Positions 311–352 (VTDLKPPAPPPIPSPAAPVPPAPQPVAPPPSAPRPAAPAGPK) are disordered. The span at 316–348 (PPAPPPIPSPAAPVPPAPQPVAPPPSAPRPAAP) shows a compositional bias: pro residues. Positions 356 to 393 (FVSPLAKKLAAEKGIDLTQVKGTGPDGRIIKKDIDSFV) constitute a Peripheral subunit-binding (PSBD) domain. A CoA-binding site is contributed by arginine 461. The residue at position 466 (lysine 466) is an N6-acetyllysine. Residue lysine 473 is modified to N6-succinyllysine. Serine 475 lines the CoA pocket. N6-succinyllysine is present on lysine 547. Positions 566, 567, and 591 each coordinate CoA. Active-site residues include histidine 620 and aspartate 624.

The protein belongs to the 2-oxoacid dehydrogenase family. As to quaternary structure, part of the pyruvate dehydrogenase complex (PDHc) that is a multi-enzyme complex composed of multiple copies of three enzymes, pyruvate dehydrogenase (subunits PDH1A and PDHB, E1 component), dihydrolipoamide acetyltransferase (DLAT, E2 component), and dihydrolipoamide dehydrogenase (DLD, E3 component) to which is added an additional protein the E3-binding protein (PDHX, E3BP). In terms of structural architecture, the E2 and E3BP components assemble into a 60meric central core with icosahedral symmetry. The central core is decorated with E1 and E3 proteins. Currently, two alternative models for the E2:E3BP stoichiometry are considered as being either 48:12 (E2(48)-E3BP(12)) or 40:20 (E2(40)-E3BP(20)). Interacts with PDK2 and PDK3. Interacts with SIRT4. Interacts with PDHB. Requires (R)-lipoate as cofactor. Post-translationally, delipoylated at Lys-132 and Lys-259 by SIRT4, delipoylation decreases the PHD complex activity.

The protein localises to the mitochondrion matrix. The catalysed reaction is N(6)-[(R)-dihydrolipoyl]-L-lysyl-[protein] + acetyl-CoA = N(6)-[(R)-S(8)-acetyldihydrolipoyl]-L-lysyl-[protein] + CoA. Functionally, as part of the pyruvate dehydrogenase complex, catalyzes the transfers of an acetyl group to a lipoic acid moiety. The pyruvate dehydrogenase complex, catalyzes the overall conversion of pyruvate to acetyl-CoA and CO(2), and thereby links cytoplasmic glycolysis and the mitochondrial tricarboxylic acid (TCA) cycle. The chain is Dihydrolipoyllysine-residue acetyltransferase component of pyruvate dehydrogenase complex from Bos taurus (Bovine).